The following is a 96-amino-acid chain: Non-specific lipid-transfer protein 2 (96 aa).

The signal sequence occupies residues 1–27; it reads MMRKLAVLVLAVAMVAACGGGVVGVAG. 4 disulfide bridges follow: C30-C62, C38-C52, C53-C88, and C64-C95.

In terms of biological role, transfer lipids across membranes. May play a role in plant defense or in the biosynthesis of cuticle layers. The sequence is that of Non-specific lipid-transfer protein 2 (LTP-2) from Oryza sativa subsp. japonica (Rice).